The primary structure comprises 601 residues: Elongation factor 4 (601 aa).

The tr-type G domain occupies 6-188 (SHIRNFSIIA…QIVHRVPAPE (183 aa)). GTP contacts are provided by residues 18-23 (DHGKST) and 135-138 (NKID).

Belongs to the TRAFAC class translation factor GTPase superfamily. Classic translation factor GTPase family. LepA subfamily.

Its subcellular location is the cell inner membrane. It catalyses the reaction GTP + H2O = GDP + phosphate + H(+). Its function is as follows. Required for accurate and efficient protein synthesis under certain stress conditions. May act as a fidelity factor of the translation reaction, by catalyzing a one-codon backward translocation of tRNAs on improperly translocated ribosomes. Back-translocation proceeds from a post-translocation (POST) complex to a pre-translocation (PRE) complex, thus giving elongation factor G a second chance to translocate the tRNAs correctly. Binds to ribosomes in a GTP-dependent manner. This Anaeromyxobacter dehalogenans (strain 2CP-1 / ATCC BAA-258) protein is Elongation factor 4.